Reading from the N-terminus, the 393-residue chain is NAD(P)H-quinone oxidoreductase subunit H, chloroplastic (393 aa).

This sequence belongs to the complex I 49 kDa subunit family. NDH is composed of at least 16 different subunits, 5 of which are encoded in the nucleus.

The protein resides in the plastid. The protein localises to the chloroplast thylakoid membrane. It catalyses the reaction a plastoquinone + NADH + (n+1) H(+)(in) = a plastoquinol + NAD(+) + n H(+)(out). The catalysed reaction is a plastoquinone + NADPH + (n+1) H(+)(in) = a plastoquinol + NADP(+) + n H(+)(out). In terms of biological role, NDH shuttles electrons from NAD(P)H:plastoquinone, via FMN and iron-sulfur (Fe-S) centers, to quinones in the photosynthetic chain and possibly in a chloroplast respiratory chain. The immediate electron acceptor for the enzyme in this species is believed to be plastoquinone. Couples the redox reaction to proton translocation, and thus conserves the redox energy in a proton gradient. The protein is NAD(P)H-quinone oxidoreductase subunit H, chloroplastic of Spinacia oleracea (Spinach).